The sequence spans 2359 residues: Nonribosomal peptide synthetase anaPS (2359 aa).

An adenylation 1 region spans residues 239–633 (RNATVHGDTL…VRRKDNQVKI (395 aa)). The 77-residue stretch at 770-846 (AAQGKGEEAI…ELASAANLSN (77 aa)) folds into the Carrier 1 domain. Serine 807 carries the O-(pantetheine 4'-phosphoryl)serine modification. The tract at residues 883-1292 (EDIYPSTALQ…VGDLPRMSRQ (410 aa)) is condensation 1. The interval 1321 to 1709 (LEYPNACAVS…GRKDSQIKIR (389 aa)) is adenylation 2. Positions 1842–1918 (APSNSVEQDL…AIANKIGVVS (77 aa)) constitute a Carrier 2 domain. Serine 1879 is subject to O-(pantetheine 4'-phosphoryl)serine. The interval 1936 to 2356 (LTPIQEFFFE…LVKCLEDLAS (421 aa)) is condensation 2.

Belongs to the NRP synthetase family.

It carries out the reaction anthranilate + L-tryptophan + 2 ATP = (R)-benzodiazepinedione + 2 AMP + 2 diphosphate + H(+). The protein operates within alkaloid biosynthesis. In terms of biological role, nonribosomal peptide synthetase; part of the gene cluster that mediates the biosynthesis of the prenylated pyrroloindoline diketopiperazine acetylaszonalenin. The first step in the pathway is the formation of (R)-benzodiazepinedione by condensation of tryptophan and anthranilic acid catalyzed by the non-ribosomal peptide synthetase anaPS. The prenyltransferase anaPT then converts (R)-benzodiazepinedione to aszonalenin in the presence of dimethylallyl diphosphate (DMAPP) via C3-prenylation. The last step in the biosynthesis of acetylaszonalenin via acetylation of aszonalenin at position N1 catalyzed by anaAT. This chain is Nonribosomal peptide synthetase anaPS, found in Neosartorya fischeri (strain ATCC 1020 / DSM 3700 / CBS 544.65 / FGSC A1164 / JCM 1740 / NRRL 181 / WB 181) (Aspergillus fischerianus).